The following is a 185-amino-acid chain: Small ribosomal subunit protein uS4 (185 aa).

An S4 RNA-binding domain is found at 107-179 (RRLQTLVYRK…NGRRKRKNNH (73 aa)). Residues 161–185 (NTPLTNPEINGRRKRKNNHAGKEDN) form a disordered region.

Belongs to the universal ribosomal protein uS4 family.

The chain is Small ribosomal subunit protein uS4 from Entamoeba histolytica (strain ATCC 30459 / HM-1:IMSS / ABRM).